A 249-amino-acid polypeptide reads, in one-letter code: Undecaprenyl-diphosphatase (249 aa).

A run of 8 helical transmembrane segments spans residues 11-31 (GLTEFLPISSSGHLAIFTAIF), 35-55 (PDVGYFAFLHLATFLAVLIFV), 80-100 (LVLSTIPAVIVGLCFGDFIES), 101-121 (VFSSTFLIGVFLSITGILMLL), 135-155 (IPYLDAMIVGIFQAFSVLPGI), 175-195 (AVKYSFLMGLPVTFGAGILEL), 202-222 (AEQLFGFVISFLTGLLGLYLV), and 226-246 (VIGGKLKIFGYYCFLASFFVL).

Belongs to the UppP family.

It is found in the cell membrane. It carries out the reaction di-trans,octa-cis-undecaprenyl diphosphate + H2O = di-trans,octa-cis-undecaprenyl phosphate + phosphate + H(+). Functionally, catalyzes the dephosphorylation of undecaprenyl diphosphate (UPP). The polypeptide is Undecaprenyl-diphosphatase (Methanococcus maripaludis (strain C5 / ATCC BAA-1333)).